A 127-amino-acid chain; its full sequence is MLVTGVDLIEIDRINQAVSRWGQRFARRVWTEAEWLRCRDSAQSLAARWAAKEAAAKALGVGLKGIGHPACAVAWREIEVANDTQGKPLLRLHGAAQQRANELGIRHWSVSLSHSGDQAIAFVVGMG.

Residues Asp-7 and Glu-53 each coordinate Mg(2+).

Belongs to the P-Pant transferase superfamily. AcpS family. Requires Mg(2+) as cofactor.

Its subcellular location is the cytoplasm. It catalyses the reaction apo-[ACP] + CoA = holo-[ACP] + adenosine 3',5'-bisphosphate + H(+). Transfers the 4'-phosphopantetheine moiety from coenzyme A to a Ser of acyl-carrier-protein. In Herpetosiphon aurantiacus (strain ATCC 23779 / DSM 785 / 114-95), this protein is Holo-[acyl-carrier-protein] synthase.